The following is a 257-amino-acid chain: 7-carboxy-7-deazaguanine synthase (257 aa).

The interval 1 to 25 (MKSVDHPVDVLPAEHSAETPGDARA) is disordered. Substrate-binding positions include 39 to 41 (RQG) and Arg54. One can recognise a Radical SAM core domain in the interval 45-244 (LTGTESVFIR…AISRGYQYCD (200 aa)). [4Fe-4S] cluster is bound by residues Cys58, Cys62, and Cys65. Thr67 contacts Mg(2+). Residue Thr99 coordinates substrate. Residues Gly101 and 143 to 145 (SPK) contribute to the S-adenosyl-L-methionine site.

The protein belongs to the radical SAM superfamily. 7-carboxy-7-deazaguanine synthase family. Homodimer. Requires [4Fe-4S] cluster as cofactor. S-adenosyl-L-methionine is required as a cofactor. The cofactor is Mg(2+).

The enzyme catalyses 6-carboxy-5,6,7,8-tetrahydropterin + H(+) = 7-carboxy-7-deazaguanine + NH4(+). It functions in the pathway purine metabolism; 7-cyano-7-deazaguanine biosynthesis. In terms of biological role, catalyzes the complex heterocyclic radical-mediated conversion of 6-carboxy-5,6,7,8-tetrahydropterin (CPH4) to 7-carboxy-7-deazaguanine (CDG), a step common to the biosynthetic pathways of all 7-deazapurine-containing compounds. The protein is 7-carboxy-7-deazaguanine synthase of Rhodopirellula baltica (strain DSM 10527 / NCIMB 13988 / SH1).